Here is a 571-residue protein sequence, read N- to C-terminus: Adenine deaminase (571 aa).

It belongs to the metallo-dependent hydrolases superfamily. Adenine deaminase family. It depends on Mn(2+) as a cofactor.

It catalyses the reaction adenine + H2O + H(+) = hypoxanthine + NH4(+). In Dehalococcoides mccartyi (strain ATCC BAA-2266 / KCTC 15142 / 195) (Dehalococcoides ethenogenes (strain 195)), this protein is Adenine deaminase.